The sequence spans 249 residues: Small ribosomal subunit protein uS5 (249 aa).

Positions 1–14 (MSAEAPKRQFGDRR) are enriched in basic and acidic residues. The disordered stretch occupies residues 1–29 (MSAEAPKRQFGDRRRGGRRGGRRDGEEKG). In terms of domain architecture, S5 DRBM spans 71–134 (LKDDVMKIRS…VIAKLSIIPI (64 aa)).

The protein belongs to the universal ribosomal protein uS5 family. As to quaternary structure, component of the small ribosomal subunit. Mature ribosomes consist of a small (40S) and a large (60S) subunit. The 40S subunit contains about 32 different proteins and 1 molecule of RNA (18S). The 60S subunit contains 45 different proteins and 3 molecules of RNA (25S, 5.8S and 5S).

The protein localises to the cytoplasm. In terms of biological role, component of the ribosome, a large ribonucleoprotein complex responsible for the synthesis of proteins in the cell. The small ribosomal subunit (SSU) binds messenger RNAs (mRNAs) and translates the encoded message by selecting cognate aminoacyl-transfer RNA (tRNA) molecules. The large subunit (LSU) contains the ribosomal catalytic site termed the peptidyl transferase center (PTC), which catalyzes the formation of peptide bonds, thereby polymerizing the amino acids delivered by tRNAs into a polypeptide chain. The nascent polypeptides leave the ribosome through a tunnel in the LSU and interact with protein factors that function in enzymatic processing, targeting, and the membrane insertion of nascent chains at the exit of the ribosomal tunnel. RPS2 is important for the assembly and function of the 40S ribosomal subunitand is nvolved in nucleolar processing of pre-18S ribosomal RNA and ribosome assembly. The chain is Small ribosomal subunit protein uS5 (RPS21) from Candida albicans (strain SC5314 / ATCC MYA-2876) (Yeast).